The sequence spans 337 residues: Thiazole synthase (337 aa).

A disordered region spans residues methionine 1 to alanine 41. Residues glycine 10–glycine 25 show a composition bias toward low complexity. The span at leucine 26–alanine 41 shows a compositional bias: gly residues. The active-site Schiff-base intermediate with DXP is lysine 144. 1-deoxy-D-xylulose 5-phosphate contacts are provided by residues glycine 205, alanine 231–glycine 232, and asparagine 253–threonine 254. A disordered region spans residues phenylalanine 302–arginine 337. Residues valine 319–arginine 337 are compositionally biased toward low complexity.

This sequence belongs to the ThiG family. Homotetramer. Forms heterodimers with either ThiH or ThiS.

It is found in the cytoplasm. It catalyses the reaction [ThiS sulfur-carrier protein]-C-terminal-Gly-aminoethanethioate + 2-iminoacetate + 1-deoxy-D-xylulose 5-phosphate = [ThiS sulfur-carrier protein]-C-terminal Gly-Gly + 2-[(2R,5Z)-2-carboxy-4-methylthiazol-5(2H)-ylidene]ethyl phosphate + 2 H2O + H(+). It functions in the pathway cofactor biosynthesis; thiamine diphosphate biosynthesis. In terms of biological role, catalyzes the rearrangement of 1-deoxy-D-xylulose 5-phosphate (DXP) to produce the thiazole phosphate moiety of thiamine. Sulfur is provided by the thiocarboxylate moiety of the carrier protein ThiS. In vitro, sulfur can be provided by H(2)S. This is Thiazole synthase from Frankia casuarinae (strain DSM 45818 / CECT 9043 / HFP020203 / CcI3).